Here is a 284-residue protein sequence, read N- to C-terminus: Tropomyosin (284 aa).

The stretch at 1 to 273 (MEAIKKKMQA…KEKYKSISDE (273 aa)) forms a coiled coil.

The protein belongs to the tropomyosin family. Homodimer. As to expression, ubiquitous, but especially prevalent in the anterior muscle bundles associated with legs. Expression in the mid and posterior regions is probably related to the numerous, small muscle bundles associated with the digestive and reproductive systems (at protein level).

Functionally, tropomyosin, in association with the troponin complex, plays a central role in the calcium dependent regulation of muscle contraction. This is Tropomyosin from Psoroptes ovis (Sheep scab mite).